The primary structure comprises 363 residues: MIIDTPEVQDINSFSRFESLQEIYGIVWMLVPILTLVVGITIGVLVIVWLEREISAGIQQRIGPEYAGPFGILQALADGTKLLLKENLLPSRGDSPLFSIGPSMAVISILLSYSVIPFSYRLVLADLNVGVFLWIAISSIAPIGLLMSGYGSNNKYSFLGGLRAAAQSISYEIPLTLCVLSISLLSNSSSTVDIIEAQSKYGFWGWNLWRQPIGFLIFLISSLAECERLPFDLPEAEEELVAGYQTEYSGIKFAFFYITSYFNLLVSSLFVTILYLGGWNMSIPYIDFLPLFEINNVGGIFRTTTELFITLAKTFFFLFISITTRWTLPRLRMDQLLNLGWKFLLPISLGNLLLTTSSQLLSL.

7 consecutive transmembrane segments (helical) span residues 30-50 (LVPI…IVWL), 98-118 (FSIG…VIPF), 129-149 (VGVF…LMSG), 165-185 (AAQS…ISLL), 253-273 (FAFF…FVTI), 303-323 (TTTE…ISIT), and 336-356 (LLNL…LLTT).

This sequence belongs to the complex I subunit 1 family. As to quaternary structure, NDH is composed of at least 16 different subunits, 5 of which are encoded in the nucleus.

Its subcellular location is the plastid. It localises to the chloroplast thylakoid membrane. The catalysed reaction is a plastoquinone + NADH + (n+1) H(+)(in) = a plastoquinol + NAD(+) + n H(+)(out). It catalyses the reaction a plastoquinone + NADPH + (n+1) H(+)(in) = a plastoquinol + NADP(+) + n H(+)(out). In terms of biological role, NDH shuttles electrons from NAD(P)H:plastoquinone, via FMN and iron-sulfur (Fe-S) centers, to quinones in the photosynthetic chain and possibly in a chloroplast respiratory chain. The immediate electron acceptor for the enzyme in this species is believed to be plastoquinone. Couples the redox reaction to proton translocation, and thus conserves the redox energy in a proton gradient. This chain is NAD(P)H-quinone oxidoreductase subunit 1, chloroplastic, found in Pelargonium hortorum (Common geranium).